The sequence spans 376 residues: Glutamate 5-kinase (376 aa).

ATP is bound at residue Lys-10. 3 residues coordinate substrate: Ser-50, Asp-137, and Asn-149. 169–170 contributes to the ATP binding site; that stretch reads TD. Residues 275–353 form the PUA domain; it reads RGRLVLDAGA…AEIAGVLGFM (79 aa).

This sequence belongs to the glutamate 5-kinase family.

Its subcellular location is the cytoplasm. The catalysed reaction is L-glutamate + ATP = L-glutamyl 5-phosphate + ADP. It participates in amino-acid biosynthesis; L-proline biosynthesis; L-glutamate 5-semialdehyde from L-glutamate: step 1/2. Catalyzes the transfer of a phosphate group to glutamate to form L-glutamate 5-phosphate. The sequence is that of Glutamate 5-kinase from Alcanivorax borkumensis (strain ATCC 700651 / DSM 11573 / NCIMB 13689 / SK2).